Here is a 226-residue protein sequence, read N- to C-terminus: V-type proton ATPase subunit E 1 (226 aa).

Ala2 is subject to N-acetylalanine. Tyr56 bears the Phosphotyrosine mark.

It belongs to the V-ATPase E subunit family. As to quaternary structure, V-ATPase is a heteromultimeric enzyme made up of two complexes: the ATP-hydrolytic V1 complex and the proton translocation V0 complex. The V1 complex consists of three catalytic AB heterodimers that form a heterohexamer, three peripheral stalks each consisting of EG heterodimers, one central rotor including subunits D and F, and the regulatory subunits C and H. The proton translocation complex V0 consists of the proton transport subunit a, a ring of proteolipid subunits c9c'', rotary subunit d, subunits e and f, and the accessory subunits ATP6AP1/Ac45 and ATP6AP2/PRR. Interacts with RABL2/RABL2A; binds preferentially to GTP-bound RABL2. Interacts with ALDOC. Interacts with RAB11B. As to expression, expressed in brain (at protein level).

It localises to the apical cell membrane. Its subcellular location is the cytoplasmic vesicle. The protein localises to the secretory vesicle. The protein resides in the synaptic vesicle membrane. It is found in the clathrin-coated vesicle membrane. Functionally, subunit of the V1 complex of vacuolar(H+)-ATPase (V-ATPase), a multisubunit enzyme composed of a peripheral complex (V1) that hydrolyzes ATP and a membrane integral complex (V0) that translocates protons. V-ATPase is responsible for acidifying and maintaining the pH of intracellular compartments and in some cell types, is targeted to the plasma membrane, where it is responsible for acidifying the extracellular environment. This is V-type proton ATPase subunit E 1 (Atp6v1e1) from Rattus norvegicus (Rat).